The chain runs to 185 residues: UPF0301 protein Tbd_2579 (185 aa).

This sequence belongs to the UPF0301 (AlgH) family.

The sequence is that of UPF0301 protein Tbd_2579 from Thiobacillus denitrificans (strain ATCC 25259 / T1).